The chain runs to 286 residues: 2-dehydro-3-deoxyphosphooctonate aldolase (286 aa).

Belongs to the KdsA family.

It is found in the cytoplasm. The enzyme catalyses D-arabinose 5-phosphate + phosphoenolpyruvate + H2O = 3-deoxy-alpha-D-manno-2-octulosonate-8-phosphate + phosphate. The protein operates within carbohydrate biosynthesis; 3-deoxy-D-manno-octulosonate biosynthesis; 3-deoxy-D-manno-octulosonate from D-ribulose 5-phosphate: step 2/3. Its pathway is bacterial outer membrane biogenesis; lipopolysaccharide biosynthesis. In Shewanella denitrificans (strain OS217 / ATCC BAA-1090 / DSM 15013), this protein is 2-dehydro-3-deoxyphosphooctonate aldolase.